A 191-amino-acid polypeptide reads, in one-letter code: Adenylate kinase (191 aa).

Position 12–17 (Gly12–Thr17) interacts with ATP. Positions Ser34–Val63 are NMP. AMP-binding positions include Thr35, Arg40, Glu61–Val63, Gly88–Arg91, and Gln95. An LID region spans residues Gly130–Asp136. Arg131 is a binding site for ATP. Residues Arg133 and Arg145 each contribute to the AMP site. Arg173 contacts ATP.

The protein belongs to the adenylate kinase family. Monomer.

Its subcellular location is the cytoplasm. The catalysed reaction is AMP + ATP = 2 ADP. Its pathway is purine metabolism; AMP biosynthesis via salvage pathway; AMP from ADP: step 1/1. In terms of biological role, catalyzes the reversible transfer of the terminal phosphate group between ATP and AMP. Plays an important role in cellular energy homeostasis and in adenine nucleotide metabolism. The chain is Adenylate kinase from Helicobacter pylori (strain G27).